Consider the following 509-residue polypeptide: Otolin-1 (509 aa).

The signal sequence occupies residues 1-25; that stretch reads MPSLRLLAILTTLLAVVLMATQSSA. Residues 23–96 form a disordered region; the sequence is SSATRTTRRP…AYSLSPTDST (74 aa). Over residues 42–54 the composition is skewed to gly residues; that stretch reads RGGGTGGGGGGGD. The segment covering 62–75 has biased composition (polar residues); sequence RQTTTTMSPSSSLG. Asn121 is a glycosylation site (N-linked (GlcNAc...) asparagine). The region spanning 193–244 is the Collagen-like 1 domain; it reads GDKGDQGDTGMPGAPGILGKEGQKGDLGPKGEKGETGLPGLKGDLGERGKPG. Residues 202–372 form a disordered region; the sequence is GMPGAPGILG…GPKGPQGETA (171 aa). A compositionally biased stretch (basic and acidic residues) spans 213–227; sequence EGQKGDLGPKGEKGE. Residues Asn246 and Asn311 are each glycosylated (N-linked (GlcNAc...) asparagine). The Collagen-like 2 domain occupies 285–329; that stretch reads GEKGEKGEAGLPGPPGPRGSVGPPGVNGSNGLPGPVGLRGQLGSP. A compositionally biased stretch (low complexity) spans 302–322; it reads RGSVGPPGVNGSNGLPGPVGL. A compositionally biased stretch (gly residues) spans 327-342; it reads GSPGGKGEAGGRGPPG. One can recognise a C1q domain in the interval 372–509; the sequence is AEQIRSAFSV…GFLLYADPKA (138 aa). Asn417 is a glycosylation site (N-linked (GlcNAc...) asparagine).

The protein belongs to the OTOL1 family. As to quaternary structure, homooligomer; disulfide-linked; probably forms homotrimers. Interacts with otomp.

Its subcellular location is the secreted. The protein localises to the extracellular space. The protein resides in the extracellular matrix. Collagen-like protein, which provides an organic scaffold for otoliths onto the sensory epithelium of the inner ear. Acts as a scaffold for biomineralization by sequestering calcium. The protein is Otolin-1 (Otol1) of Oncorhynchus mykiss (Rainbow trout).